Here is a 201-residue protein sequence, read N- to C-terminus: Small ribosomal subunit protein uS4c (201 aa).

The interval 16-37 (GALPGLTSKRPRSGSDLRNQSR) is disordered. The 64-residue stretch at 89 to 152 (MRLDNTLFRL…RSRTLIQNHI (64 aa)) folds into the S4 RNA-binding domain.

It belongs to the universal ribosomal protein uS4 family. Part of the 30S ribosomal subunit. Contacts protein S5. The interaction surface between S4 and S5 is involved in control of translational fidelity.

The protein resides in the plastid. It is found in the chloroplast. In terms of biological role, one of the primary rRNA binding proteins, it binds directly to 16S rRNA where it nucleates assembly of the body of the 30S subunit. Its function is as follows. With S5 and S12 plays an important role in translational accuracy. The sequence is that of Small ribosomal subunit protein uS4c (rps4) from Chloranthus spicatus (Chulantree).